The sequence spans 605 residues: DNA mismatch repair protein MutL (605 aa).

Belongs to the DNA mismatch repair MutL/HexB family.

Its function is as follows. This protein is involved in the repair of mismatches in DNA. It is required for dam-dependent methyl-directed DNA mismatch repair. May act as a 'molecular matchmaker', a protein that promotes the formation of a stable complex between two or more DNA-binding proteins in an ATP-dependent manner without itself being part of a final effector complex. This Exiguobacterium sp. (strain ATCC BAA-1283 / AT1b) protein is DNA mismatch repair protein MutL.